A 240-amino-acid chain; its full sequence is MLIEHERGFVLHVRAWRETSLLVEVLTEQHGRVGLLARGVQGPRKQALRAALQPLQLIQFSAVQRGELAQLRQAEALDTAPRLVGDTMLAGFYISELLLRLAPRNDPVPELYACYAQARTYLASDLPLAWGLRRFERDVLDGLGFAFDLQHDSDGQPIDPAARYRLDPQEGALRVLSERLAQDRRETVTGAALLALGEDVMPDADDMPGLRRSMRGVLLHHLGGRGLKSWQMLEDLARRR.

Belongs to the RecO family.

Functionally, involved in DNA repair and RecF pathway recombination. This chain is DNA repair protein RecO, found in Xanthomonas euvesicatoria pv. vesicatoria (strain 85-10) (Xanthomonas campestris pv. vesicatoria).